A 483-amino-acid chain; its full sequence is MHLDQLLQNIPAKIYGKVESIPVRNLTRDSRCVGVGDIFIARQGQFCNGNDYSSQAVANGAIAVLSSLYNPFLSVVQIIAEDPIALEASLAARFYNNPSRHLDVIGITGTNGKTTVSCLVRELMERSGRRTGLIGTIEHILGENRIIDSFTTPDAILLQKYFAEMVKQNLSAAVMEVSSIGMALGRVRETEFLAGVLTNITSDHLDFHGSLEEYIAAKKQFFASLPEKGIAVVNLDCEYAPSFLNGSQARAVSYAIHQEADYRADRLKLYSSGSSYDIWYQGQVFPCETSLIGEHNVYNVLASLAVVHQFLGRDFADLVRDVRFLSAPKGRLDPILLGPFPVYIDYAHTPDALDNVCRILLQLLPKDGRLIIVFGCGGDRDRVKRPLMAKVSEHYGFSFVTSDNPRTEDPDQIIADICKGFSTDHYVVESDRKLAIEKAISMASDKDIVLVAGKGHEGYQIFKHQTIVFDDREVVCEALAALC.

Serine 30 lines the UDP-N-acetyl-alpha-D-muramoyl-L-alanyl-D-glutamate pocket. Residue 109–115 (GTNGKTT) participates in ATP binding. UDP-N-acetyl-alpha-D-muramoyl-L-alanyl-D-glutamate contacts are provided by residues 151–152 (TT), serine 178, and arginine 186. Lysine 218 is modified (N6-carboxylysine). Meso-2,6-diaminopimelate-binding positions include arginine 380, 403–406 (DNPR), glycine 453, and glutamate 457. The short motif at 403–406 (DNPR) is the Meso-diaminopimelate recognition motif element.

The protein belongs to the MurCDEF family. MurE subfamily. It depends on Mg(2+) as a cofactor. Carboxylation is probably crucial for Mg(2+) binding and, consequently, for the gamma-phosphate positioning of ATP.

The protein localises to the cytoplasm. It carries out the reaction UDP-N-acetyl-alpha-D-muramoyl-L-alanyl-D-glutamate + meso-2,6-diaminopimelate + ATP = UDP-N-acetyl-alpha-D-muramoyl-L-alanyl-gamma-D-glutamyl-meso-2,6-diaminopimelate + ADP + phosphate + H(+). It functions in the pathway cell wall biogenesis; peptidoglycan biosynthesis. In terms of biological role, catalyzes the addition of meso-diaminopimelic acid to the nucleotide precursor UDP-N-acetylmuramoyl-L-alanyl-D-glutamate (UMAG) in the biosynthesis of bacterial cell-wall peptidoglycan. The chain is UDP-N-acetylmuramoyl-L-alanyl-D-glutamate--2,6-diaminopimelate ligase from Chlamydia trachomatis serovar A (strain ATCC VR-571B / DSM 19440 / HAR-13).